A 101-amino-acid polypeptide reads, in one-letter code: Urease subunit beta (101 aa).

It belongs to the urease beta subunit family. As to quaternary structure, heterotrimer of UreA (gamma), UreB (beta) and UreC (alpha) subunits. Three heterotrimers associate to form the active enzyme.

The protein localises to the cytoplasm. It carries out the reaction urea + 2 H2O + H(+) = hydrogencarbonate + 2 NH4(+). It functions in the pathway nitrogen metabolism; urea degradation; CO(2) and NH(3) from urea (urease route): step 1/1. This is Urease subunit beta from Granulibacter bethesdensis (strain ATCC BAA-1260 / CGDNIH1).